A 64-amino-acid polypeptide reads, in one-letter code: SPbeta prophage-derived uncharacterized protein YosJ (64 aa).

The polypeptide is SPbeta prophage-derived uncharacterized protein YosJ (yosJ) (Bacillus subtilis (strain 168)).